The primary structure comprises 277 residues: Radial spoke head protein 9 homolog (277 aa).

The protein belongs to the flagellar radial spoke RSP9 family. In terms of assembly, component of axonemal radial spoke complexes.

It localises to the cytoplasm. The protein resides in the cytoskeleton. It is found in the cilium axoneme. Its subcellular location is the flagellum axoneme. The protein localises to the cell projection. It localises to the kinocilium. Its function is as follows. Functions as part of axonemal radial spoke complexes that play an important part in the motility of sperm and cilia. Essential for both the radial spoke head assembly and the central pair microtubule stability in ependymal motile cilia. Required for motility of olfactory and neural cilia and for the structural integrity of ciliary axonemes in both 9+0 and 9+2 motile cilia. The chain is Radial spoke head protein 9 homolog (rsph9) from Xenopus tropicalis (Western clawed frog).